Consider the following 194-residue polypeptide: Peptidyl-tRNA hydrolase (194 aa).

TRNA is bound at residue Tyr-17. His-22 acts as the Proton acceptor in catalysis. TRNA-binding residues include Phe-68, Asn-70, and Asn-116.

This sequence belongs to the PTH family. Monomer.

It is found in the cytoplasm. It catalyses the reaction an N-acyl-L-alpha-aminoacyl-tRNA + H2O = an N-acyl-L-amino acid + a tRNA + H(+). Hydrolyzes ribosome-free peptidyl-tRNAs (with 1 or more amino acids incorporated), which drop off the ribosome during protein synthesis, or as a result of ribosome stalling. Its function is as follows. Catalyzes the release of premature peptidyl moieties from peptidyl-tRNA molecules trapped in stalled 50S ribosomal subunits, and thus maintains levels of free tRNAs and 50S ribosomes. This is Peptidyl-tRNA hydrolase from Pasteurella multocida (strain Pm70).